The primary structure comprises 421 residues: Putative B3 domain-containing protein Os08g0333500 (421 aa).

A DNA-binding region (TF-B3) is located at residues 1–51 (MTVELEKIAGSFFISKGWKTFVHRTGLLSGQYIRFQVLTPSKINVLLFDKK). Residues 92 to 121 (SHTSNKETSSDSRTESMTDIPSSSDNSGET) are disordered. A compositionally biased stretch (basic and acidic residues) spans 95–107 (SNKETSSDSRTES). The segment covering 108 to 121 (MTDIPSSSDNSGET) has biased composition (polar residues).

The protein localises to the nucleus. This chain is Putative B3 domain-containing protein Os08g0333500, found in Oryza sativa subsp. japonica (Rice).